The primary structure comprises 216 residues: MISFIKGVLIEKDPTALLIDVNGIGYEVFVPMTTFYTLGDIDSQVSLYTHFIVREDAQQLYGFKSKVDKKVFQELIKVNGIGARTAIAILSGMDSKTLLHCIENKDYALLATVPGIGKKTAERLVVEIYDKLLKMANEIYAQTSGTTTTSQDSQAQQAPTSVVLANSIFNESVDALLALGYKQKDAEKMARSAMGDATTAAEVIRKALQGSIKSKR.

Residues 1–64 are domain I; sequence MISFIKGVLI…EDAQQLYGFK (64 aa). Positions 65–143 are domain II; it reads SKVDKKVFQE…KMANEIYAQT (79 aa). Residues 144–163 form a flexible linker region; it reads SGTTTTSQDSQAQQAPTSVV. The interval 164–216 is domain III; sequence LANSIFNESVDALLALGYKQKDAEKMARSAMGDATTAAEVIRKALQGSIKSKR.

It belongs to the RuvA family. Homotetramer. Forms an RuvA(8)-RuvB(12)-Holliday junction (HJ) complex. HJ DNA is sandwiched between 2 RuvA tetramers; dsDNA enters through RuvA and exits via RuvB. An RuvB hexamer assembles on each DNA strand where it exits the tetramer. Each RuvB hexamer is contacted by two RuvA subunits (via domain III) on 2 adjacent RuvB subunits; this complex drives branch migration. In the full resolvosome a probable DNA-RuvA(4)-RuvB(12)-RuvC(2) complex forms which resolves the HJ.

Its subcellular location is the cytoplasm. Its function is as follows. The RuvA-RuvB-RuvC complex processes Holliday junction (HJ) DNA during genetic recombination and DNA repair, while the RuvA-RuvB complex plays an important role in the rescue of blocked DNA replication forks via replication fork reversal (RFR). RuvA specifically binds to HJ cruciform DNA, conferring on it an open structure. The RuvB hexamer acts as an ATP-dependent pump, pulling dsDNA into and through the RuvAB complex. HJ branch migration allows RuvC to scan DNA until it finds its consensus sequence, where it cleaves and resolves the cruciform DNA. This Francisella tularensis subsp. tularensis (strain WY96-3418) protein is Holliday junction branch migration complex subunit RuvA.